The primary structure comprises 393 residues: ATP phosphoribosyltransferase regulatory subunit (393 aa).

The protein belongs to the class-II aminoacyl-tRNA synthetase family. HisZ subfamily. As to quaternary structure, heteromultimer composed of HisG and HisZ subunits.

It is found in the cytoplasm. The protein operates within amino-acid biosynthesis; L-histidine biosynthesis; L-histidine from 5-phospho-alpha-D-ribose 1-diphosphate: step 1/9. In terms of biological role, required for the first step of histidine biosynthesis. May allow the feedback regulation of ATP phosphoribosyltransferase activity by histidine. This is ATP phosphoribosyltransferase regulatory subunit from Synechococcus sp. (strain RCC307).